Consider the following 3332-residue polypeptide: Nonribosomal peptide synthetase imqB (3332 aa).

An adenylation 1 region spans residues Phe230 to Val622. Positions Gly764–Asp846 constitute a Carrier 1 domain. O-(pantetheine 4'-phosphoryl)serine is present on Ser801. Residues Asp886–Gln1314 form a condensation 1 region. Residues Glu1336–Arg1740 are adenylation 2. The Carrier 2 domain occupies Ala1880–Gly1954. Residue Ser1915 is modified to O-(pantetheine 4'-phosphoryl)serine. The tract at residues Glu1992–Ile2402 is condensation 2. Residues Ala2422–Arg2819 are adenylation 3. The 77-residue stretch at Glu2963–Glu3039 folds into the Carrier 3 domain. Ser3000 is modified (O-(pantetheine 4'-phosphoryl)serine). Residues Ser3058–Cys3323 form a thioesterase (TE) domain region.

The protein belongs to the NRP synthetase family.

The protein operates within secondary metabolite biosynthesis. Its function is as follows. Nonribosomal peptide synthetase; part of the gene cluster that mediates the biosynthesis of imizoquins A to D, tripeptide-derived alkaloids that serve a protective role against oxidative stress that are essential for normal germination. ImqB is a canonical three-module NRPS that assembles the tripeptide backbone of the imizoquins via condensation of Trp, Tyr, and Leu-derived precursors. N-methylation by imqF and phenol oxidation by imqC, followed by cyclization via the FAD-dependent oxidase imqH carry out the three-step transformation of L-tyrosine into tetrahydroisoquinoline. Importantly, this sequence requires the presence of a free amine in the tyrosine moiety, indicating that isoquinoline formation occurs prior to peptide bond formation. The imidazolidin-4-one ring of imizoquins could form following additional oxidation of the methyl-derived bridgehead carbon by imqH. Lastly, O-methylation by imqG and leucine hydroxylation by imqE complete biosynthesis of the imizoquins. This chain is Nonribosomal peptide synthetase imqB, found in Aspergillus flavus (strain ATCC 200026 / FGSC A1120 / IAM 13836 / NRRL 3357 / JCM 12722 / SRRC 167).